Consider the following 910-residue polypeptide: Leucine--tRNA ligase (910 aa).

Residues 50-60 (PYTNGSLHVGH) carry the 'HIGH' region motif. The short motif at 611-615 (KISKS) is the 'KMSKS' region element. Residue lysine 614 participates in ATP binding.

It belongs to the class-I aminoacyl-tRNA synthetase family.

The protein localises to the cytoplasm. It catalyses the reaction tRNA(Leu) + L-leucine + ATP = L-leucyl-tRNA(Leu) + AMP + diphosphate. The polypeptide is Leucine--tRNA ligase (Thermoplasma volcanium (strain ATCC 51530 / DSM 4299 / JCM 9571 / NBRC 15438 / GSS1)).